Here is a 390-residue protein sequence, read N- to C-terminus: Aspartate carbamoyltransferase, chloroplastic (390 aa).

The transit peptide at 1–68 directs the protein to the chloroplast; the sequence is MSIASSLTSA…NLTRNVGPVR (68 aa). Carbamoyl phosphate-binding residues include Arg-136 and Thr-137. UMP-binding residues include Arg-136 and Thr-137. Residue Lys-166 coordinates L-aspartate. Arg-187, His-215, and Gln-218 together coordinate carbamoyl phosphate. Arg-187 and His-215 together coordinate UMP. Arg-248 and Arg-310 together coordinate UMP. L-aspartate-binding residues include Arg-248 and Arg-310. Carbamoyl phosphate contacts are provided by Leu-350 and Pro-351.

It belongs to the aspartate/ornithine carbamoyltransferase superfamily. ATCase family. In terms of assembly, homotrimer.

It is found in the plastid. The protein localises to the chloroplast. It carries out the reaction carbamoyl phosphate + L-aspartate = N-carbamoyl-L-aspartate + phosphate + H(+). It functions in the pathway pyrimidine metabolism; UMP biosynthesis via de novo pathway; (S)-dihydroorotate from bicarbonate: step 2/3. Its activity is regulated as follows. Feedback inhibited by UMP. In terms of biological role, catalyzes the condensation of carbamoyl phosphate and aspartate to form carbamoyl aspartate and inorganic phosphate, the committed step in the de novo pyrimidine nucleotide biosynthesis pathway. This chain is Aspartate carbamoyltransferase, chloroplastic (PYRB), found in Arabidopsis thaliana (Mouse-ear cress).